The primary structure comprises 157 residues: SsrA-binding protein (157 aa).

Positions A138 to R151 are enriched in basic and acidic residues. A disordered region spans residues A138–S157.

It belongs to the SmpB family.

The protein localises to the cytoplasm. In terms of biological role, required for rescue of stalled ribosomes mediated by trans-translation. Binds to transfer-messenger RNA (tmRNA), required for stable association of tmRNA with ribosomes. tmRNA and SmpB together mimic tRNA shape, replacing the anticodon stem-loop with SmpB. tmRNA is encoded by the ssrA gene; the 2 termini fold to resemble tRNA(Ala) and it encodes a 'tag peptide', a short internal open reading frame. During trans-translation Ala-aminoacylated tmRNA acts like a tRNA, entering the A-site of stalled ribosomes, displacing the stalled mRNA. The ribosome then switches to translate the ORF on the tmRNA; the nascent peptide is terminated with the 'tag peptide' encoded by the tmRNA and targeted for degradation. The ribosome is freed to recommence translation, which seems to be the essential function of trans-translation. The protein is SsrA-binding protein of Cereibacter sphaeroides (strain ATCC 17025 / ATH 2.4.3) (Rhodobacter sphaeroides).